The primary structure comprises 222 residues: Ribosomal RNA small subunit methyltransferase I (222 aa).

Belongs to the methyltransferase superfamily. RsmI family.

Its subcellular location is the cytoplasm. The enzyme catalyses cytidine(1402) in 16S rRNA + S-adenosyl-L-methionine = 2'-O-methylcytidine(1402) in 16S rRNA + S-adenosyl-L-homocysteine + H(+). Functionally, catalyzes the 2'-O-methylation of the ribose of cytidine 1402 (C1402) in 16S rRNA. In Mycoplasmopsis pulmonis (strain UAB CTIP) (Mycoplasma pulmonis), this protein is Ribosomal RNA small subunit methyltransferase I.